Consider the following 295-residue polypeptide: UDP-N-acetylenolpyruvoylglucosamine reductase (295 aa).

Positions 24–188 constitute an FAD-binding PCMH-type domain; that stretch reads KVGGNAEIFF…LKAVFKINKG (165 aa). R168 is an active-site residue. S217 serves as the catalytic Proton donor. E287 is a catalytic residue.

It belongs to the MurB family. Requires FAD as cofactor.

It localises to the cytoplasm. It carries out the reaction UDP-N-acetyl-alpha-D-muramate + NADP(+) = UDP-N-acetyl-3-O-(1-carboxyvinyl)-alpha-D-glucosamine + NADPH + H(+). It participates in cell wall biogenesis; peptidoglycan biosynthesis. Cell wall formation. The polypeptide is UDP-N-acetylenolpyruvoylglucosamine reductase (Rickettsia massiliae (strain Mtu5)).